The sequence spans 228 residues: MENQPKLNSSKEVIAFLAERFPQCFSAEGEARPLKIGIFQDLVERVEGEMNLSKTQLRSALRLYTSSWRYLYGVKPGATRVDLDGNPCGELDEQHVEHARKQLEEAKARVQAQRAEQQAKKREAAAAAGEKEDAPRRERKPRPAPRRKETTPRTPRAEKPAAKAPRAPREEQHTPVSDISALTVGQSLKVKAGNNAMDATVLEVTKDGVRVQLNSGMSLIVRAEHLVF.

The segment at 105–178 is disordered; the sequence is EAKARVQAQR…REEQHTPVSD (74 aa). 2 stretches are compositionally biased toward basic and acidic residues: residues 117 to 136 and 146 to 173; these read QQAKKREAAAAAGEKEDAPR and RRKETTPRTPRAEKPAAKAPRAPREEQH.

This sequence belongs to the ProQ family.

Its subcellular location is the cytoplasm. Its function is as follows. RNA chaperone with significant RNA binding, RNA strand exchange and RNA duplexing activities. May regulate ProP activity through an RNA-based, post-transcriptional mechanism. The polypeptide is RNA chaperone ProQ (Citrobacter koseri (strain ATCC BAA-895 / CDC 4225-83 / SGSC4696)).